Here is a 281-residue protein sequence, read N- to C-terminus: Oxidoreductase-like protein SRL4 (281 aa).

NADP(+)-binding residues include Leu39, Thr60, Lys67, Lys152, and Lys197. Residue Lys197 is the Lowers pKa of active site Tyr of the active site.

The protein belongs to the short-chain dehydrogenases/reductases (SDR) family.

May be involved in the regulation of dNTP production. Induces the SOS system when expressed in E.coli, therefore, it may play a role in DNA metabolism and/or in genome stability. The sequence is that of Oxidoreductase-like protein SRL4 (SRL4) from Saccharomyces cerevisiae (strain ATCC 204508 / S288c) (Baker's yeast).